A 255-amino-acid polypeptide reads, in one-letter code: Aspartate/glutamate leucyltransferase (255 aa).

The protein belongs to the R-transferase family. Bpt subfamily.

The protein localises to the cytoplasm. It catalyses the reaction N-terminal L-glutamyl-[protein] + L-leucyl-tRNA(Leu) = N-terminal L-leucyl-L-glutamyl-[protein] + tRNA(Leu) + H(+). The enzyme catalyses N-terminal L-aspartyl-[protein] + L-leucyl-tRNA(Leu) = N-terminal L-leucyl-L-aspartyl-[protein] + tRNA(Leu) + H(+). In terms of biological role, functions in the N-end rule pathway of protein degradation where it conjugates Leu from its aminoacyl-tRNA to the N-termini of proteins containing an N-terminal aspartate or glutamate. The polypeptide is Aspartate/glutamate leucyltransferase (Leptospira borgpetersenii serovar Hardjo-bovis (strain JB197)).